We begin with the raw amino-acid sequence, 200 residues long: Pyridoxal 5'-phosphate synthase subunit PdxT (200 aa).

52–54 serves as a coordination point for L-glutamine; sequence GES. Residue Cys84 is the Nucleophile of the active site. Residues Arg116 and 145–146 each bind L-glutamine; that span reads IR. Catalysis depends on charge relay system residues His181 and Glu183.

The protein belongs to the glutaminase PdxT/SNO family. In terms of assembly, in the presence of PdxS, forms a dodecamer of heterodimers. Only shows activity in the heterodimer.

It carries out the reaction aldehydo-D-ribose 5-phosphate + D-glyceraldehyde 3-phosphate + L-glutamine = pyridoxal 5'-phosphate + L-glutamate + phosphate + 3 H2O + H(+). The enzyme catalyses L-glutamine + H2O = L-glutamate + NH4(+). It participates in cofactor biosynthesis; pyridoxal 5'-phosphate biosynthesis. Its function is as follows. Catalyzes the hydrolysis of glutamine to glutamate and ammonia as part of the biosynthesis of pyridoxal 5'-phosphate. The resulting ammonia molecule is channeled to the active site of PdxS. The chain is Pyridoxal 5'-phosphate synthase subunit PdxT from Saccharolobus islandicus (strain Y.N.15.51 / Yellowstone #2) (Sulfolobus islandicus).